Reading from the N-terminus, the 591-residue chain is V-type ATP synthase alpha chain (591 aa).

Position 232–239 (232–239) interacts with ATP; that stretch reads GPFGAGKT.

This sequence belongs to the ATPase alpha/beta chains family.

It carries out the reaction ATP + H2O + 4 H(+)(in) = ADP + phosphate + 5 H(+)(out). In terms of biological role, produces ATP from ADP in the presence of a proton gradient across the membrane. The V-type alpha chain is a catalytic subunit. In Clostridium perfringens (strain SM101 / Type A), this protein is V-type ATP synthase alpha chain.